A 149-amino-acid chain; its full sequence is Flagellar assembly factor FliW (149 aa).

This sequence belongs to the FliW family. In terms of assembly, interacts with translational regulator CsrA and flagellin(s).

The protein localises to the cytoplasm. In terms of biological role, acts as an anti-CsrA protein, binds CsrA and prevents it from repressing translation of its target genes, one of which is flagellin. Binds to flagellin and participates in the assembly of the flagellum. The chain is Flagellar assembly factor FliW from Thermotoga neapolitana (strain ATCC 49049 / DSM 4359 / NBRC 107923 / NS-E).